A 411-amino-acid polypeptide reads, in one-letter code: Protein Brevis radix-like 2 (411 aa).

Disordered stretches follow at residues 10 to 31 and 103 to 149; these read KDGG…KSLT and AAPS…DDDE. Polar residues predominate over residues 20–31; that stretch reads ATATPNSGKSLT. Residues 136 to 149 are compositionally biased toward acidic residues; sequence GEEDYDDDDDDDDE. A BRX 1 domain is found at 161 to 217; the sequence is REWTAQVEPGVQITFVSIPGGAGNDLKRIRFSREMFNKWEAQRWWGENYDRVVELYN. Disordered stretches follow at residues 245–294 and 324–346; these read SRVG…VAAA and AGPA…ASVS. A compositionally biased stretch (low complexity) spans 276-294; it reads SRTASSKAQLSSSSSVAAA. A BRX 2 domain is found at 356–411; that stretch reads TEWVEQDEPGVSITIREFGDGTRELRRVRFSRERFGEERAKVWWEQNRDRIHAQYL.

The protein belongs to the BRX family.

It localises to the nucleus. In Oryza sativa subsp. japonica (Rice), this protein is Protein Brevis radix-like 2 (BRXL2).